Reading from the N-terminus, the 52-residue chain is Alpha-crystallin B chain (52 aa).

Belongs to the small heat shock protein (HSP20) family. In terms of assembly, homodimer. Aggregates with homologous proteins, including alpha-A-crystallin and the small heat shock protein HSPB1, to form large heteromeric complexes.

In terms of biological role, may contribute to the transparency and refractive index of the lens. In Turdus merula (Common blackbird), this protein is Alpha-crystallin B chain (CRYAB).